The following is a 289-amino-acid chain: 4-diphosphocytidyl-2-C-methyl-D-erythritol kinase (289 aa).

Residue Lys-10 is part of the active site. Residue 99–109 (PMGGGLGGGSS) participates in ATP binding. The active site involves Asp-141.

The protein belongs to the GHMP kinase family. IspE subfamily. As to quaternary structure, homodimer.

The catalysed reaction is 4-CDP-2-C-methyl-D-erythritol + ATP = 4-CDP-2-C-methyl-D-erythritol 2-phosphate + ADP + H(+). It participates in isoprenoid biosynthesis; isopentenyl diphosphate biosynthesis via DXP pathway; isopentenyl diphosphate from 1-deoxy-D-xylulose 5-phosphate: step 3/6. Catalyzes the phosphorylation of the position 2 hydroxy group of 4-diphosphocytidyl-2C-methyl-D-erythritol. The polypeptide is 4-diphosphocytidyl-2-C-methyl-D-erythritol kinase (Enterobacter sp. (strain 638)).